The primary structure comprises 122 residues: NADH-quinone oxidoreductase subunit A (122 aa).

The next 3 membrane-spanning stretches (helical) occupy residues 10–30 (MIVL…LTLG), 66–86 (IFAL…PWAV), and 91–111 (LGLF…VGLA).

This sequence belongs to the complex I subunit 3 family. NDH-1 is composed of 14 different subunits. Subunits NuoA, H, J, K, L, M, N constitute the membrane sector of the complex.

The protein resides in the cell membrane. It carries out the reaction a quinone + NADH + 5 H(+)(in) = a quinol + NAD(+) + 4 H(+)(out). Its function is as follows. NDH-1 shuttles electrons from NADH, via FMN and iron-sulfur (Fe-S) centers, to quinones in the respiratory chain. The immediate electron acceptor for the enzyme in this species is believed to be a menaquinone. Couples the redox reaction to proton translocation (for every two electrons transferred, four hydrogen ions are translocated across the cytoplasmic membrane), and thus conserves the redox energy in a proton gradient. The sequence is that of NADH-quinone oxidoreductase subunit A from Bacillus anthracis.